A 448-amino-acid chain; its full sequence is Ribosomal protein uS12 methylthiotransferase RimO (448 aa).

The MTTase N-terminal domain occupies 13 to 128 (KSFFITTLGC…AGEILRKNFP (116 aa)). Cysteine 22, cysteine 58, cysteine 91, cysteine 167, cysteine 171, and cysteine 174 together coordinate [4Fe-4S] cluster. A Radical SAM core domain is found at 153–382 (NYSKPYSYVK…AYLGTLKTIH (230 aa)). Residues 383 to 448 (QNRIGKIYPC…ELDMSGTWVD (66 aa)) enclose the TRAM domain.

This sequence belongs to the methylthiotransferase family. RimO subfamily. Requires [4Fe-4S] cluster as cofactor.

The protein resides in the cytoplasm. The enzyme catalyses L-aspartate(89)-[ribosomal protein uS12]-hydrogen + (sulfur carrier)-SH + AH2 + 2 S-adenosyl-L-methionine = 3-methylsulfanyl-L-aspartate(89)-[ribosomal protein uS12]-hydrogen + (sulfur carrier)-H + 5'-deoxyadenosine + L-methionine + A + S-adenosyl-L-homocysteine + 2 H(+). Catalyzes the methylthiolation of an aspartic acid residue of ribosomal protein uS12. The sequence is that of Ribosomal protein uS12 methylthiotransferase RimO from Leptospira biflexa serovar Patoc (strain Patoc 1 / Ames).